The sequence spans 298 residues: Foldase protein PrsA 1 (298 aa).

The signal sequence occupies residues Met1–Gly19. The N-palmitoyl cysteine moiety is linked to residue Cys20. Cys20 is lipidated: S-diacylglycerol cysteine. Positions Glu136 to Lys232 constitute a PpiC domain.

Belongs to the PrsA family.

Its subcellular location is the cell membrane. It catalyses the reaction [protein]-peptidylproline (omega=180) = [protein]-peptidylproline (omega=0). Functionally, plays a major role in protein secretion by helping the post-translocational extracellular folding of several secreted proteins. The chain is Foldase protein PrsA 1 (prsA1) from Lactiplantibacillus plantarum (strain ATCC BAA-793 / NCIMB 8826 / WCFS1) (Lactobacillus plantarum).